A 273-amino-acid polypeptide reads, in one-letter code: MAIVKCKPTSAGRRHVVKVVNAELHKGKPYAPLLDSKSKTGGRNNLGRITTRHIGGGHKQHYRLVDFKRNKLDIPAVVERLEYDPNRSANIALVLYKDGERRYILAPKGLSVGDTIQAGVSAPIKAGNALPMRNIPVGTTVHNVELKPGKGGQIARSAGAYVQIIAREGNYVTLRLRSGEMRKVLAECTATIGEVGNSEHMLRVLGKAGANRWRGVRPTVRGTAMNPVDHPHGGGEGRNFGKHPVTPWGVQTKGKKTRHNKRTDKYIVRRRGK.

Disordered regions lie at residues 31–50 and 221–273; these read APLLDSKSKTGGRNNLGRIT and RGTA…RRGK. Residues 253-273 are compositionally biased toward basic residues; the sequence is KGKKTRHNKRTDKYIVRRRGK.

Belongs to the universal ribosomal protein uL2 family. As to quaternary structure, part of the 50S ribosomal subunit. Forms a bridge to the 30S subunit in the 70S ribosome.

Functionally, one of the primary rRNA binding proteins. Required for association of the 30S and 50S subunits to form the 70S ribosome, for tRNA binding and peptide bond formation. It has been suggested to have peptidyltransferase activity; this is somewhat controversial. Makes several contacts with the 16S rRNA in the 70S ribosome. This is Large ribosomal subunit protein uL2 from Actinobacillus pleuropneumoniae serotype 7 (strain AP76).